A 314-amino-acid polypeptide reads, in one-letter code: Acetyl-coenzyme A carboxylase carboxyl transferase subunit alpha (314 aa).

The CoA carboxyltransferase C-terminal domain maps to 38-292; that stretch reads RLERKSAALL…ANAIDEELDA (255 aa).

It belongs to the AccA family. In terms of assembly, acetyl-CoA carboxylase is a heterohexamer composed of biotin carboxyl carrier protein (AccB), biotin carboxylase (AccC) and two subunits each of ACCase subunit alpha (AccA) and ACCase subunit beta (AccD).

The protein localises to the cytoplasm. It catalyses the reaction N(6)-carboxybiotinyl-L-lysyl-[protein] + acetyl-CoA = N(6)-biotinyl-L-lysyl-[protein] + malonyl-CoA. It functions in the pathway lipid metabolism; malonyl-CoA biosynthesis; malonyl-CoA from acetyl-CoA: step 1/1. Functionally, component of the acetyl coenzyme A carboxylase (ACC) complex. First, biotin carboxylase catalyzes the carboxylation of biotin on its carrier protein (BCCP) and then the CO(2) group is transferred by the carboxyltransferase to acetyl-CoA to form malonyl-CoA. This chain is Acetyl-coenzyme A carboxylase carboxyl transferase subunit alpha, found in Erythrobacter litoralis (strain HTCC2594).